Consider the following 67-residue polypeptide: ATP synthase F(0) complex subunit 8 (67 aa).

The helical transmembrane segment at 8–24 (TWFTTIVAMILSLFILM) threads the bilayer. N6-acetyllysine; alternate is present on K54. K54 carries the N6-succinyllysine; alternate modification. At K57 the chain carries N6-acetyllysine.

This sequence belongs to the ATPase protein 8 family. As to quaternary structure, component of the ATP synthase complex composed at least of ATP5F1A/subunit alpha, ATP5F1B/subunit beta, ATP5MC1/subunit c (homooctomer), MT-ATP6/subunit a, MT-ATP8/subunit 8, ATP5ME/subunit e, ATP5MF/subunit f, ATP5MG/subunit g, ATP5MK/subunit k, ATP5MJ/subunit j, ATP5F1C/subunit gamma, ATP5F1D/subunit delta, ATP5F1E/subunit epsilon, ATP5PF/subunit F6, ATP5PB/subunit b, ATP5PD/subunit d, ATP5PO/subunit OSCP. ATP synthase complex consists of a soluble F(1) head domain (subunits alpha(3) and beta(3)) - the catalytic core - and a membrane F(0) domain - the membrane proton channel (subunits c, a, 8, e, f, g, k and j). These two domains are linked by a central stalk (subunits gamma, delta, and epsilon) rotating inside the F1 region and a stationary peripheral stalk (subunits F6, b, d, and OSCP). Interacts with PRICKLE3.

The protein resides in the mitochondrion membrane. Subunit 8, of the mitochondrial membrane ATP synthase complex (F(1)F(0) ATP synthase or Complex V) that produces ATP from ADP in the presence of a proton gradient across the membrane which is generated by electron transport complexes of the respiratory chain. ATP synthase complex consist of a soluble F(1) head domain - the catalytic core - and a membrane F(1) domain - the membrane proton channel. These two domains are linked by a central stalk rotating inside the F(1) region and a stationary peripheral stalk. During catalysis, ATP synthesis in the catalytic domain of F(1) is coupled via a rotary mechanism of the central stalk subunits to proton translocation. In vivo, can only synthesize ATP although its ATP hydrolase activity can be activated artificially in vitro. Part of the complex F(0) domain. The polypeptide is ATP synthase F(0) complex subunit 8 (Oryctolagus cuniculus (Rabbit)).